The primary structure comprises 264 residues: Major prion protein (264 aa).

Positions 1 to 24 (MVKSHIGSWILVLFVAMWSDVGLC) are cleaved as a signal peptide. Residues 25-241 (KKRPKPGGGW…ESEAYYQRGA (217 aa)) form an interaction with GRB2, ERI3 and SYN1 region. The disordered stretch occupies residues 28–118 (PKPGGGWNTG…QWNKPSKPKT (91 aa)). 6 consecutive repeat copies span residues 54–62 (SQGGGGWGQ), 63–70 (PHGGGWGQ), 71–78 (PHGGGWGQ), 79–86 (PHGGGWGQ), 87–94 (PHGGGWGQ), and 95–103 (PHGGGGWGQ). The tract at residues 54-103 (SQGGGGWGQPHGGGWGQPHGGGWGQPHGGGWGQPHGGGWGQPHGGGGWGQ) is 6 X 8 AA tandem repeats of P-H-G-G-G-W-G-Q. A compositionally biased stretch (gly residues) spans 55–107 (QGGGGWGQPHGGGWGQPHGGGWGQPHGGGWGQPHGGGWGQPHGGGGWGQGGTH). 12 residues coordinate Cu(2+): H72, G73, G74, H80, G81, G82, H88, G89, G90, H96, G98, and G99. Cysteines 190 and 225 form a disulfide. N-linked (GlcNAc...) asparagine glycosylation is found at N192 and N208. Residue A241 is the site of GPI-anchor amidated alanine attachment. The propeptide at 242–264 (SVILFSSPPVILLISFLIFLIVG) is removed in mature form.

It belongs to the prion family. Monomer and homodimer. Has a tendency to aggregate into amyloid fibrils containing a cross-beta spine, formed by a steric zipper of superposed beta-strands. Soluble oligomers may represent an intermediate stage on the path to fibril formation. Copper binding may promote oligomerization. Interacts with GRB2, APP, ERI3/PRNPIP and SYN1. Mislocalized cytosolically exposed PrP interacts with MGRN1; this interaction alters MGRN1 subcellular location and causes lysosomal enlargement. Interacts with KIAA1191.

It is found in the cell membrane. It localises to the golgi apparatus. Functionally, its primary physiological function is unclear. Has cytoprotective activity against internal or environmental stresses. May play a role in neuronal development and synaptic plasticity. May be required for neuronal myelin sheath maintenance. May play a role in iron uptake and iron homeostasis. Soluble oligomers are toxic to cultured neuroblastoma cells and induce apoptosis (in vitro). Association with GPC1 (via its heparan sulfate chains) targets PRNP to lipid rafts. Also provides Cu(2+) or Zn(2+) for the ascorbate-mediated GPC1 deaminase degradation of its heparan sulfate side chains. In Tragelaphus imberbis (Lesser kudu), this protein is Major prion protein (PRNP).